We begin with the raw amino-acid sequence, 309 residues long: Eugenol synthase 2 (309 aa).

NADP(+) is bound by residues 13–16 (TGYI), 35–45 (VRETTVSDPVK), arginine 36, 86–88 (FMQ), 111–113 (SEF), lysine 134, and 154–156 (NCF). Lysine 134 serves as the catalytic Proton donor/acceptor.

Belongs to the NmrA-type oxidoreductase family. As to expression, mostly expressed in petals, and, to a lower extent, in sepals, stamens and pistils.

The enzyme catalyses eugenol + a carboxylate + NADP(+) = a coniferyl ester + NADPH. It catalyses the reaction eugenol + acetate + NADP(+) = (E)-coniferyl acetate + NADPH. The protein operates within aromatic compound metabolism; phenylpropanoid biosynthesis. Catalyzes the synthesis of the phenylpropene eugenol from coniferyl acetate. Phenylpropenes are produced by plants as defense compounds with antimicrobial and antianimal properties, or as floral attractants of pollinators. The sequence is that of Eugenol synthase 2 from Clarkia breweri (Fairy fans).